Reading from the N-terminus, the 1823-residue chain is AF4/FMR2 family member lilli (1823 aa).

Low complexity predominate over residues 1–41 (MAQQQQQQHQQQQHHQQQQQQLQQQQQLLQYNNNSYNLNYN). 12 disordered regions span residues 1 to 87 (MAQQ…DPEI), 126 to 305 (GFGS…ENHI), 422 to 544 (QQLT…KKKY), 570 to 626 (AGPG…WHLS), 686 to 712 (DSRH…YGVG), 753 to 1057 (PKNQ…DIPT), 1071 to 1287 (AAAQ…LKPR), 1322 to 1350 (ARQH…GART), 1413 to 1448 (FMLK…AEQL), 1480 to 1531 (ENSA…AIAS), 1547 to 1567 (TCSE…APRL), and 1715 to 1744 (GNTP…IVPQ). A compositionally biased stretch (basic and acidic residues) spans 53 to 79 (REKYERQQGIQSDDRETSLFGEPRRLN). Low complexity-rich tracts occupy residues 126 to 147 (GFGS…SSAS), 156 to 174 (QQQQ…QQQQ), and 205 to 249 (PSSS…TSSP). Pro residues predominate over residues 426 to 438 (PTPPKASPTPPVI). Threonine 434 carries the phosphothreonine modification. The segment covering 441–454 (LKTEKNHSLEKQDS) has biased composition (basic and acidic residues). A compositionally biased stretch (acidic residues) spans 456–466 (LENDLELSESD). Phosphoserine is present on residues serine 463 and serine 465. Residues 475 to 531 (SAGNSSNSSESDSSESGSEASSKGDPQQQQQQQQQHLLHQQQQHQQQQLLLQQQQQQ) show a composition bias toward low complexity. The segment covering 582–598 (AAGGVGSGSGSTGGGSS) has biased composition (gly residues). Residues 599-612 (SSGMGTMSSSNSSN) show a composition bias toward low complexity. A compositionally biased stretch (low complexity) spans 764–785 (SDSGSGSSGSGSSSSDSAGGSS). The span at 818–827 (HKAQPNSVTL) shows a compositional bias: polar residues. The segment covering 839–849 (PRQKKPRKKKM) has biased composition (basic residues). Phosphoserine occurs at positions 859 and 860. Composition is skewed to low complexity over residues 877 to 906 (AATA…AAPA), 917 to 947 (QAQQ…SSQA), 962 to 979 (GTAS…VAAG), 1002 to 1057 (AAMA…DIPT), and 1102 to 1161 (NSSN…QLLQ). A DNA-binding region (a.T hook) is located at residues 908-920 (KKGRGRPRKQAQQ). Phosphoserine occurs at positions 939 and 941. Positions 1172–1181 (TLKQSAQQRL) are enriched in polar residues. 2 stretches are compositionally biased toward low complexity: residues 1182 to 1203 (SSSD…ASSS) and 1253 to 1280 (QQQQ…QQQQ). Positions 1334-1344 (TQQNGHLSSRS) are enriched in polar residues. Polar residues predominate over residues 1480 to 1496 (ENSANASPNKLQQQNAR). Phosphoserine is present on serine 1486. Over residues 1497–1531 (QLPLSQSQLQHQHQHQHQLQQQQSQSTATGHAIAS) the composition is skewed to low complexity. The span at 1555–1565 (TPPPAAPPPAP) shows a compositional bias: pro residues. Low complexity predominate over residues 1715–1735 (GNTPSSISPSNSVGSQGSGSN).

It belongs to the AF4 family.

It is found in the nucleus. Functionally, has a role in transcriptional regulation. Acts in parallel with the Ras/MAPK and the PI3K/PKB pathways in the control of cell identity and cellular growth. Essential for regulation of the cytoskeleton and cell growth but not for cell proliferation or growth rate. Required specifically for the microtubule-based basal transport of lipid droplets. Plays a partially redundant function downstream of Raf in cell fate specification in the developing eye. Pair-rule protein that regulates embryonic cellularization, gastrulation and segmentation. In Drosophila virilis (Fruit fly), this protein is AF4/FMR2 family member lilli.